Here is a 143-residue protein sequence, read N- to C-terminus: Large ribosomal subunit protein uL11 (143 aa).

This sequence belongs to the universal ribosomal protein uL11 family. In terms of assembly, part of the ribosomal stalk of the 50S ribosomal subunit. Interacts with L10 and the large rRNA to form the base of the stalk. L10 forms an elongated spine to which L12 dimers bind in a sequential fashion forming a multimeric L10(L12)X complex. Post-translationally, one or more lysine residues are methylated.

Its function is as follows. Forms part of the ribosomal stalk which helps the ribosome interact with GTP-bound translation factors. The protein is Large ribosomal subunit protein uL11 of Paraburkholderia phytofirmans (strain DSM 17436 / LMG 22146 / PsJN) (Burkholderia phytofirmans).